Reading from the N-terminus, the 415-residue chain is Ankyrin repeat domain-containing protein 10 (415 aa).

ANK repeat units follow at residues 20 to 49 (SLRF…RAHL), 56 to 85 (YGWT…SLNV), 90 to 119 (YAQT…NINK), and 123 to 152 (EGET…HTDL). The span at 303 to 325 (TGSNGVSNGQPLSSGQASVSANG) shows a compositional bias: polar residues. The tract at residues 303–330 (TGSNGVSNGQPLSSGQASVSANGTEEPE) is disordered.

The chain is Ankyrin repeat domain-containing protein 10 (Ankrd10) from Mus musculus (Mouse).